Reading from the N-terminus, the 426-residue chain is 3-isopropylmalate dehydratase large subunit (426 aa).

3 residues coordinate [4Fe-4S] cluster: C307, C367, and C370.

Belongs to the aconitase/IPM isomerase family. LeuC type 2 subfamily. In terms of assembly, heterodimer of LeuC and LeuD. It depends on [4Fe-4S] cluster as a cofactor.

It catalyses the reaction (2R,3S)-3-isopropylmalate = (2S)-2-isopropylmalate. Its pathway is amino-acid biosynthesis; L-leucine biosynthesis; L-leucine from 3-methyl-2-oxobutanoate: step 2/4. In terms of biological role, catalyzes the isomerization between 2-isopropylmalate and 3-isopropylmalate, via the formation of 2-isopropylmaleate. The chain is 3-isopropylmalate dehydratase large subunit from Sulfurovum sp. (strain NBC37-1).